The following is a 213-amino-acid chain: Ribulose-phosphate 3-epimerase (213 aa).

Serine 9 is a binding site for substrate. Positions 34, 36, and 66 each coordinate a divalent metal cation. The active-site Proton acceptor is the aspartate 36. Substrate-binding positions include histidine 66, 139–142 (GFGG), 166–168 (DGG), and 186–187 (GS). Residue aspartate 166 participates in a divalent metal cation binding. Residue aspartate 166 is the Proton donor of the active site.

It belongs to the ribulose-phosphate 3-epimerase family. Co(2+) serves as cofactor. Requires Fe(2+) as cofactor. It depends on Mn(2+) as a cofactor. Zn(2+) is required as a cofactor.

The enzyme catalyses D-ribulose 5-phosphate = D-xylulose 5-phosphate. It functions in the pathway carbohydrate degradation; pentose phosphate pathway; D-xylulose 5-phosphate from D-ribulose 5-phosphate (non-oxidative stage): step 1/1. In terms of biological role, catalyzes the reversible epimerization of D-ribulose 5-phosphate to D-xylulose 5-phosphate. The protein is Ribulose-phosphate 3-epimerase (RPE1) of Encephalitozoon cuniculi (strain GB-M1) (Microsporidian parasite).